A 191-amino-acid polypeptide reads, in one-letter code: Large ribosomal subunit protein bL9c (191 aa).

Residues 1-35 (MASPSCASTLPWTAAAFSYPRRLQTRRAPSLVIVA) constitute a chloroplast transit peptide.

The protein belongs to the bacterial ribosomal protein bL9 family. As to quaternary structure, part of the 50S ribosomal subunit.

The protein resides in the plastid. The protein localises to the chloroplast. Functionally, binds to the 23S rRNA. This is Large ribosomal subunit protein bL9c (RPL9) from Triticum aestivum (Wheat).